Reading from the N-terminus, the 582-residue chain is Cryptochrome DASH, chloroplastic/mitochondrial (582 aa).

The N-terminal 49 residues, 1–49 (MLHFLSSSSPLNPQFLLLPRQSARLRVLLSIPVSAMSSSSSSSSRGALA), are a transit peptide targeting the chloroplast and mitochondrion. The region spanning 84–234 (GVAIVWFRND…KLQLIWGATL (151 aa)) is the Photolyase/cryptochrome alpha/beta domain. Positions 560 to 582 (GHQKRDQQFNRQRRPGHMYRRQK) are disordered. The span at 570–582 (RQRRPGHMYRRQK) shows a compositional bias: basic residues.

This sequence belongs to the DNA photolyase class-1 family. The cofactor is FAD. Requires (6R)-5,10-methylene-5,6,7,8-tetrahydrofolate as cofactor.

Its subcellular location is the plastid. The protein resides in the chloroplast. It localises to the mitochondrion. Its function is as follows. May have a photoreceptor function. Binds ss- and ds-DNA in a sequence non-specific manner, lacks photolyase activity. This is Cryptochrome DASH, chloroplastic/mitochondrial (CRYD) from Oryza sativa subsp. japonica (Rice).